We begin with the raw amino-acid sequence, 204 residues long: NADH-quinone oxidoreductase subunit C (204 aa).

This sequence belongs to the complex I 30 kDa subunit family. In terms of assembly, NDH-1 is composed of 14 different subunits. Subunits NuoB, C, D, E, F, and G constitute the peripheral sector of the complex.

The protein localises to the cell inner membrane. The catalysed reaction is a quinone + NADH + 5 H(+)(in) = a quinol + NAD(+) + 4 H(+)(out). NDH-1 shuttles electrons from NADH, via FMN and iron-sulfur (Fe-S) centers, to quinones in the respiratory chain. The immediate electron acceptor for the enzyme in this species is believed to be ubiquinone. Couples the redox reaction to proton translocation (for every two electrons transferred, four hydrogen ions are translocated across the cytoplasmic membrane), and thus conserves the redox energy in a proton gradient. The polypeptide is NADH-quinone oxidoreductase subunit C (Rhodopseudomonas palustris (strain ATCC BAA-98 / CGA009)).